Here is a 144-residue protein sequence, read N- to C-terminus: Snake venom vascular endothelial growth factor toxin VR-1 (144 aa).

The signal sequence occupies residues 1-24 (MAAYLLAVAILFCIQGWPSGTVQG). Q25 carries the post-translational modification Pyrrolidone carboxylic acid. Intrachain disulfides connect C38-C80, C69-C115, and C73-C117. Residues 120–134 (RWKQGEPEGPKEPRR) are compositionally biased toward basic and acidic residues. The interval 120–144 (RWKQGEPEGPKEPRRGGVRAKFPFD) is disordered. Positions 134–144 (RGGVRAKFPFD) are excised as a propeptide.

This sequence belongs to the PDGF/VEGF growth factor family. Snake venom VEGF subfamily. As to quaternary structure, homodimer; disulfide-linked. Interacts with VEGF receptor-2 (KDR) with high affinity, but not with VEGF receptor-1 (Flt-1), VEGF receptor-3 (FLT4), and neuropilin-1 (NRP1). In terms of tissue distribution, expressed by the venom gland.

The protein resides in the secreted. Snake venom VEGFs may contribute to venom dispersion and prey subjugation by inducing vascular permeability and hypotension. This protein induces angiogenesis probably through VEGF receptor (KDR/VEGFR-2) signaling, as well as drastic hypotension. The hypotension is mediated by nitric oxide, which is produced by VEGF-activated endothelium NO synthase. May also induce vascular permeability. The sequence is that of Snake venom vascular endothelial growth factor toxin VR-1 from Daboia russelii (Russel's viper).